Consider the following 611-residue polypeptide: DNA mismatch repair protein MutL (611 aa).

The tract at residues 353-387 (NRQAAGGNHFATPAPAAAPRPASTASSSWQRQEPV) is disordered. A compositionally biased stretch (low complexity) spans 363 to 380 (ATPAPAAAPRPASTASSS).

This sequence belongs to the DNA mismatch repair MutL/HexB family.

In terms of biological role, this protein is involved in the repair of mismatches in DNA. It is required for dam-dependent methyl-directed DNA mismatch repair. May act as a 'molecular matchmaker', a protein that promotes the formation of a stable complex between two or more DNA-binding proteins in an ATP-dependent manner without itself being part of a final effector complex. The polypeptide is DNA mismatch repair protein MutL (Erwinia tasmaniensis (strain DSM 17950 / CFBP 7177 / CIP 109463 / NCPPB 4357 / Et1/99)).